The primary structure comprises 356 residues: Fructose-bisphosphate aldolase 1, chloroplastic (356 aa).

A chloroplast-targeting transit peptide spans 1 to 6; the sequence is GLTIRA. Residues Arg-53 and Lys-143 each contribute to the substrate site. Glu-183 acts as the Proton acceptor in catalysis. The Schiff-base intermediate with dihydroxyacetone-P role is filled by Lys-225.

It belongs to the class I fructose-bisphosphate aldolase family.

Its subcellular location is the plastid. The protein localises to the chloroplast. The enzyme catalyses beta-D-fructose 1,6-bisphosphate = D-glyceraldehyde 3-phosphate + dihydroxyacetone phosphate. The protein operates within carbohydrate degradation; glycolysis; D-glyceraldehyde 3-phosphate and glycerone phosphate from D-glucose: step 4/4. The chain is Fructose-bisphosphate aldolase 1, chloroplastic from Pisum sativum (Garden pea).